A 114-amino-acid chain; its full sequence is Nucleoid-associated protein PCC8801_2554 (114 aa).

It belongs to the YbaB/EbfC family. As to quaternary structure, homodimer.

The protein localises to the cytoplasm. Its subcellular location is the nucleoid. In terms of biological role, binds to DNA and alters its conformation. May be involved in regulation of gene expression, nucleoid organization and DNA protection. In Rippkaea orientalis (strain PCC 8801 / RF-1) (Cyanothece sp. (strain PCC 8801)), this protein is Nucleoid-associated protein PCC8801_2554.